The chain runs to 83 residues: MANKLVLISLLCVVLVAKITQAAPQYAPGDEPSYDEDTDDSDKLVENDTSITDEDYAAIEASLSETFNTAADPGRRLGEGSKP.

The first 22 residues, 1 to 22 (MANKLVLISLLCVVLVAKITQA), serve as a signal peptide directing secretion. Residues 25-51 (QYAPGDEPSYDEDTDDSDKLVENDTSI) form a disordered region. An N-linked (GlcNAc...) asparagine glycan is attached at Asn47. The interval 54–83 (EDYAAIEASLSETFNTAADPGRRLGEGSKP) is sufficient for host thrombin inhibition. The blocks exosite I of host thrombin stretch occupies residues 56–62 (YAAIEAS). Positions 64–83 (SETFNTAADPGRRLGEGSKP) are disordered. The interval 72–75 (DPGR) is blocks active site cleft of host thrombin in a reverse direction compared to substrates. Over residues 73-83 (PGRRLGEGSKP) the composition is skewed to basic and acidic residues.

It belongs to the anophelin family. As to quaternary structure, interacts with human F2 (thrombin); the interaction results in thrombin inhibition. Salivary gland (at protein level).

Its subcellular location is the secreted. With respect to regulation, increasing concentration of NaCl decreases affinity for thrombin. In terms of biological role, salivary protein with anticoagulant activity that inhibits host thrombin (F2); binds to the proteinase in a reverse orientation (opposite to substrates). Inhibits thrombin-induced platelet aggregation. This chain is Salivary thrombin inhibitor anophelin, found in Anopheles albimanus (New world malaria mosquito).